Reading from the N-terminus, the 460-residue chain is MSSPTTSSLDTPLPGNGPPQPGAPSSSPTVKEEGPEPWPGGPDPDVPGTDEASSACSTDWVIPDPEEEPERKRKKGPAPKMLGHELCRVCGDKASGFHYNVLSCEGCKGFFRRSVVRGGARRYACRGGGTCQMDAFMRRKCQQCRLRKCKEAGMREQCVLSEEQIRKKKIRKQQQESQSQSQSPVGPQGSSSSASGPGASPGGSEAGSQGSGEGEGVQLTAAQELMIQQLVAAQLQCNKRSFSDQPKVTPWPLGADPQSRDARQQRFAHFTELAIISVQEIVDFAKQVPGFLQLGREDQIALLKASTIEIMLLETARRYNHETECITFLKDFTYSKDDFHRAGLQVEFINPIFEFSRAMRRLGLDDAEYALLIAINIFSADRPNVQEPGRVEALQQPYVEALLSYTRIKRPQDQLRFPRMLMKLVSLRTLSSVHSEQVFALRLQDKKLPPLLSEIWDVHE.

The span at 1-14 shows a compositional bias: low complexity; sequence MSSPTTSSLDTPLP. A disordered region spans residues 1–78; the sequence is MSSPTTSSLD…PERKRKKGPA (78 aa). Residues 1–85 are transactivation AF-1; required for ligand-independent transactivation function; sequence MSSPTTSSLD…GPAPKMLGHE (85 aa). The segment covering 36-45 has biased composition (pro residues); the sequence is EPWPGGPDPD. The segment at residues 84-161 is a DNA-binding region (nuclear receptor); it reads HELCRVCGDK…AGMREQCVLS (78 aa). 2 NR C4-type zinc fingers span residues 87-107 and 125-149; these read CRVCGDKASGFHYNVLSCEGC and CRGGGTCQMDAFMRRKCQQCRLRKC. A disordered region spans residues 169-216; that stretch reads KIRKQQQESQSQSQSPVGPQGSSSSASGPGASPGGSEAGSQGSGEGEG. Positions 175–198 are enriched in low complexity; that stretch reads QESQSQSQSPVGPQGSSSSASGPG. Residues 199–215 show a composition bias toward gly residues; it reads ASPGGSEAGSQGSGEGE. The tract at residues 219-460 is transactivation AF-2; required for ligand-dependent transactivation function; mediates interaction with CCAR2; the sequence is LTAAQELMIQ…LLSEIWDVHE (242 aa). In terms of domain architecture, NR LBD spans 222 to 460; the sequence is AQELMIQQLV…LLSEIWDVHE (239 aa). Glycyl lysine isopeptide (Lys-Gly) (interchain with G-Cter in SUMO2) cross-links involve residues K409 and K447.

Belongs to the nuclear hormone receptor family. NR1 subfamily. As to quaternary structure, forms a heterodimer with RXR. Interacts with CCAR2 (via N-terminus) in a ligand-independent manner. Interacts (when sumoylated) with GPS2; interaction with GPS2 onto hepatic acute phase protein promoters prevents N-Cor corepressor complex dissociation. Interacts with ABCA12 and ABCA1; this interaction is required for ABCA1 localization to the cell surface and is necessary for its normal activity and stability. Post-translationally, sumoylated by SUMO2 at Lys-409 and Lys-447 during the hepatic acute phase response, leading to promote interaction with GPS2 and prevent N-Cor corepressor complex dissociation. Ubiquitous.

It is found in the nucleus. In terms of biological role, nuclear receptor that exhibits a ligand-dependent transcriptional activation activity. Binds preferentially to double-stranded oligonucleotide direct repeats having the consensus half-site sequence 5'-AGGTCA-3' and 4-nt spacing (DR-4). Regulates cholesterol uptake through MYLIP-dependent ubiquitination of LDLR, VLDLR and LRP8; DLDLR and LRP8. Interplays functionally with RORA for the regulation of genes involved in liver metabolism. Induces LPCAT3-dependent phospholipid remodeling in endoplasmic reticulum (ER) membranes of hepatocytes, driving SREBF1 processing and lipogenesis. Via LPCAT3, triggers the incorporation of arachidonate into phosphatidylcholines of ER membranes, increasing membrane dynamics and enabling triacylglycerols transfer to nascent very low-density lipoprotein (VLDL) particles. Via LPCAT3 also counteracts lipid-induced ER stress response and inflammation, likely by modulating SRC kinase membrane compartmentalization and limiting the synthesis of lipid inflammatory mediators. Plays an anti-inflammatory role during the hepatic acute phase response by acting as a corepressor: inhibits the hepatic acute phase response by preventing dissociation of the N-Cor corepressor complex. This is Oxysterols receptor LXR-beta (NR1H2) from Homo sapiens (Human).